We begin with the raw amino-acid sequence, 84 residues long: Anaphase-promoting complex subunit 11 (84 aa).

The RING-type; atypical zinc-finger motif lies at 34 to 77 (CPDCKLPGDDCPLIWGACNHAFHLHCILKWVNSQTSQAHCPMCR).

This sequence belongs to the RING-box family. Part of the APC/C complex composed of at least 10 subunits. Interacts with APC2.

The protein localises to the cytoplasm. It is found in the nucleus. The protein operates within protein modification; protein ubiquitination. In terms of biological role, component of the anaphase promoting complex/cyclosome (APC/C), a cell cycle-regulated E3 ubiquitin-protein ligase complex that controls progression through mitosis and the G1 phase of the cell cycle. The APC/C complex controls several key steps in the cell cycle by mediating ubiquitination and subsequent degradation of target proteins such as cyclins. The APC/C complex is required for the female gametophyte development and is involved in several aspect of development by controlling cell division and cell elongation. Involved in the control of endoreduplication. May recruit the E2 ubiquitin-conjugating enzymes to the complex. This Arabidopsis thaliana (Mouse-ear cress) protein is Anaphase-promoting complex subunit 11.